We begin with the raw amino-acid sequence, 847 residues long: Alanine--tRNA ligase (847 aa).

Zn(2+)-binding residues include His-554, His-558, Cys-656, and His-660.

Belongs to the class-II aminoacyl-tRNA synthetase family. Zn(2+) serves as cofactor.

The protein localises to the cytoplasm. It catalyses the reaction tRNA(Ala) + L-alanine + ATP = L-alanyl-tRNA(Ala) + AMP + diphosphate. Functionally, catalyzes the attachment of alanine to tRNA(Ala) in a two-step reaction: alanine is first activated by ATP to form Ala-AMP and then transferred to the acceptor end of tRNA(Ala). Also edits incorrectly charged Ser-tRNA(Ala) and Gly-tRNA(Ala) via its editing domain. This Helicobacter pylori (strain J99 / ATCC 700824) (Campylobacter pylori J99) protein is Alanine--tRNA ligase.